A 444-amino-acid polypeptide reads, in one-letter code: Baeyer-Villiger oxidase ptaJ (444 aa).

This sequence belongs to the questin oxidase family. It depends on NADPH as a cofactor.

The protein operates within secondary metabolite biosynthesis. In terms of biological role, baeyer-Villiger oxidase; part of the gene cluster that mediates the biosynthesis of pestheic acid, a diphenyl ether which is a biosynthetic precursor of the unique chloropupukeananes. The biosynthesis initiates from condensation of acetate and malonate units catalyzed by the non-reducing PKS ptaA. As the ptaA protein is TE/CLC domain-deficient, hydrolysis and Claisen cyclization of the polyketide could be catalyzed by ptaB containing a beta-lactamase domain. The ptaB protein might hydrolyze the thioester bond between the ACP of ptaA and the intermediate to release atrochrysone carboxylic acid, which is spontaneously dehydrated to form endocrocin anthrone. Endocrocin anthrone is then converted to endocrocin, catalyzed by the anthrone oxygenase ptaC. Spontaneous decarboxylation of endocrocin occurs to generate emodin. An O-methyltransferase (ptaH or ptaI) could methylate emodin to form physcion. PtaJ could then catalyze the oxidative cleavage of physcion, and rotation of the intermediate could then afford desmethylisosulochrin. PtaF, a putative NADH-dependent oxidoreductase, might also participate in the oxidative cleavage step. Desmethylisosulochrin is then transformed by another O-methyltransferase (ptaH or ptaI) to form isosulochrin. Chlorination of isosulochrin by ptaM in the cyclohexadienone B ring then produces chloroisosulochrin. PtaE is responsible for the oxidative coupling reactions of both benzophenones isosulouchrin and chloroisosulouchrin to RES-1214-1 and pestheic acid respectively, regardless of chlorination. In Pestalotiopsis fici (strain W106-1 / CGMCC3.15140), this protein is Baeyer-Villiger oxidase ptaJ.